The sequence spans 261 residues: uncharacterized protein (261 aa).

This is an uncharacterized protein from Haemophilus influenzae (strain ATCC 51907 / DSM 11121 / KW20 / Rd).